We begin with the raw amino-acid sequence, 302 residues long: Ribosomal RNA small subunit methyltransferase A (302 aa).

N27, L29, G54, E75, D100, and N138 together coordinate S-adenosyl-L-methionine.

Belongs to the class I-like SAM-binding methyltransferase superfamily. rRNA adenine N(6)-methyltransferase family. RsmA subfamily.

The protein localises to the cytoplasm. The catalysed reaction is adenosine(1518)/adenosine(1519) in 16S rRNA + 4 S-adenosyl-L-methionine = N(6)-dimethyladenosine(1518)/N(6)-dimethyladenosine(1519) in 16S rRNA + 4 S-adenosyl-L-homocysteine + 4 H(+). In terms of biological role, specifically dimethylates two adjacent adenosines (A1518 and A1519) in the loop of a conserved hairpin near the 3'-end of 16S rRNA in the 30S particle. May play a critical role in biogenesis of 30S subunits. In Natranaerobius thermophilus (strain ATCC BAA-1301 / DSM 18059 / JW/NM-WN-LF), this protein is Ribosomal RNA small subunit methyltransferase A.